The following is a 222-amino-acid chain: N-(5'-phosphoribosyl)anthranilate isomerase (222 aa).

This sequence belongs to the TrpF family.

It carries out the reaction N-(5-phospho-beta-D-ribosyl)anthranilate = 1-(2-carboxyphenylamino)-1-deoxy-D-ribulose 5-phosphate. It functions in the pathway amino-acid biosynthesis; L-tryptophan biosynthesis; L-tryptophan from chorismate: step 3/5. This is N-(5'-phosphoribosyl)anthranilate isomerase from Rhizobium etli (strain ATCC 51251 / DSM 11541 / JCM 21823 / NBRC 15573 / CFN 42).